The following is a 470-amino-acid chain: Protein ASPARTIC PROTEASE IN GUARD CELL 2 (470 aa).

Positions 1-19 are cleaved as a signal peptide; that stretch reads MLLPLFFFFLHLHLHLSSS. The Peptidase A1 domain occupies 131 to 466; that stretch reads YFVRIGVGSP…DGANGFVGFG (336 aa). D149 is a catalytic residue. 6 disulfides stabilise this stretch: C159-C162, C165-C239, C186-C204, C191-C199, C278-C470, and C389-C431. D350 is an active-site residue.

This sequence belongs to the peptidase A1 family.

In terms of biological role, aspartic protease that may be involved in drought avoidance through abscisic acid signaling. In Arabidopsis thaliana (Mouse-ear cress), this protein is Protein ASPARTIC PROTEASE IN GUARD CELL 2 (ASPG2).